Here is a 568-residue protein sequence, read N- to C-terminus: Urease subunit alpha (568 aa).

The region spanning G130–F568 is the Urease domain. Positions 135, 137, and 218 each coordinate Ni(2+). K218 carries the N6-carboxylysine modification. H220 is a substrate binding site. The Ni(2+) site is built by H247 and H273. H321 (proton donor) is an active-site residue. D361 is a binding site for Ni(2+).

This sequence belongs to the metallo-dependent hydrolases superfamily. Urease alpha subunit family. Heterotrimer of UreA (gamma), UreB (beta) and UreC (alpha) subunits. Three heterotrimers associate to form the active enzyme. It depends on Ni cation as a cofactor. Post-translationally, carboxylation allows a single lysine to coordinate two nickel ions.

It is found in the cytoplasm. It carries out the reaction urea + 2 H2O + H(+) = hydrogencarbonate + 2 NH4(+). It participates in nitrogen metabolism; urea degradation; CO(2) and NH(3) from urea (urease route): step 1/1. This is Urease subunit alpha from Nitrosospira multiformis (strain ATCC 25196 / NCIMB 11849 / C 71).